The chain runs to 371 residues: Leu/Ile/Val-binding protein homolog 2 (371 aa).

The first 23 residues, 1-23, serve as a signal peptide directing secretion; sequence MKKSLFCGVCLCALVAMGGTSFA.

The protein belongs to the leucine-binding protein family.

Component of an amino-acid transport system. The polypeptide is Leu/Ile/Val-binding protein homolog 2 (Brucella abortus (strain 2308)).